Here is a 395-residue protein sequence, read N- to C-terminus: MTSILTNVAAMAALQTLRGIDSNMEETQARVSSGLRVGTASDNAAYWSIATTMRSDNMALSAVQDALGLGAAKVDTAYAGMENAVEVVKEIRAKLVAATEDGVDKAKIQEEIEQLKQQLTSIATAASFSGENWLQADLTAPVTKSVVGSFVRDSSGVVSVKTIDYVLDGNSVLFDTVGNNGILDKVYDVSESSVTLSINTGGVVSEHTVAAYTVDDLIAGGAVFQGNYALAGGVNYVKVEGVWVEAVASSGAPGQEVAAVTTAAAPITADSWAVDTTAGPAASVPAPASIENIDITNAAQAANLDALIRGVDEALEDLISATSALGSISMRIGMQEEFVSKLTDSIDSGIGRLVDADMNEESTRLKALQTQQQLAIQSLSIANTNSENILQLFRQ.

This sequence belongs to the bacterial flagellin family.

It localises to the secreted. The protein localises to the bacterial flagellum. Flagellin is the subunit protein which polymerizes to form the filaments of bacterial flagella. The polypeptide is Flagellin D (flaD) (Rhizobium meliloti (Ensifer meliloti)).